A 538-amino-acid polypeptide reads, in one-letter code: Atos homolog protein B (538 aa).

A compositionally biased stretch (low complexity) spans 1–18 (MRHVQAEPSPSSEPEAGP). 3 disordered regions span residues 1–103 (MRHV…GLLG), 156–185 (HTRD…QLHT), and 197–308 (GGKS…PMGR). Residues 227-238 (HTPPGPGPPGPC) show a composition bias toward pro residues. S254 and S255 each carry phosphoserine. Positions 274–286 (AANSSDAKATSFW) are enriched in polar residues. Positions 348-430 (LLGNFEESLL…VPKVGTVQVT (83 aa)) are required for macropage invasion. The transactivation domain 1 (TAD1) stretch occupies residues 436–444 (QTVVKMFLV).

The protein belongs to the ATOS family.

The protein localises to the nucleus. Its function is as follows. Transcription regulator that may syncronize transcriptional and translational programs. In Macaca fascicularis (Crab-eating macaque), this protein is Atos homolog protein B.